The sequence spans 112 residues: ATP synthase subunit c (112 aa).

The next 2 helical transmembrane spans lie at 36 to 56 (FSVL…AIGM) and 81 to 101 (MFIA…IALI).

It belongs to the ATPase C chain family. As to quaternary structure, F-type ATPases have 2 components, F(1) - the catalytic core - and F(0) - the membrane proton channel. F(1) has five subunits: alpha(3), beta(3), gamma(1), delta(1), epsilon(1). F(0) has three main subunits: a(1), b(2) and c(10-14). The alpha and beta chains form an alternating ring which encloses part of the gamma chain. F(1) is attached to F(0) by a central stalk formed by the gamma and epsilon chains, while a peripheral stalk is formed by the delta and b chains.

Its subcellular location is the cell inner membrane. F(1)F(0) ATP synthase produces ATP from ADP in the presence of a proton or sodium gradient. F-type ATPases consist of two structural domains, F(1) containing the extramembraneous catalytic core and F(0) containing the membrane proton channel, linked together by a central stalk and a peripheral stalk. During catalysis, ATP synthesis in the catalytic domain of F(1) is coupled via a rotary mechanism of the central stalk subunits to proton translocation. Functionally, key component of the F(0) channel; it plays a direct role in translocation across the membrane. A homomeric c-ring of between 10-14 subunits forms the central stalk rotor element with the F(1) delta and epsilon subunits. The sequence is that of ATP synthase subunit c from Campylobacter jejuni subsp. jejuni serotype O:6 (strain 81116 / NCTC 11828).